The primary structure comprises 202 residues: Uclacyanin-2 (202 aa).

The first 29 residues, methionine 1–alanine 29, serve as a signal peptide directing secretion. The region spanning valine 30 to alanine 126 is the Phytocyanin domain. Position 65 (histidine 65) interacts with Cu cation. An N-linked (GlcNAc...) asparagine glycan is attached at asparagine 86. Cu cation-binding residues include cysteine 106, histidine 111, and methionine 118. Positions alanine 129–serine 181 are disordered. A compositionally biased stretch (low complexity) spans threonine 141–threonine 169. A lipid anchor (GPI-anchor amidated serine) is attached at serine 178. The propeptide at glycine 179 to methionine 202 is removed in mature form.

The protein resides in the cell membrane. In terms of biological role, probably acts as an electron carrier involved in oxygen activation and/or lignin formation. The sequence is that of Uclacyanin-2 from Arabidopsis thaliana (Mouse-ear cress).